We begin with the raw amino-acid sequence, 167 residues long: CDP-archaeol synthase (167 aa).

5 helical membrane passes run 4-24 (ILEA…PVIL), 51-71 (GFLG…IIYP), 80-100 (FKVS…GSFI), 104-124 (LNLP…LISA), and 139-158 (VLLL…VLAY).

Belongs to the CDP-archaeol synthase family. Requires Mg(2+) as cofactor.

It localises to the cell membrane. It carries out the reaction 2,3-bis-O-(geranylgeranyl)-sn-glycerol 1-phosphate + CTP + H(+) = CDP-2,3-bis-O-(geranylgeranyl)-sn-glycerol + diphosphate. Its pathway is membrane lipid metabolism; glycerophospholipid metabolism. Functionally, catalyzes the formation of CDP-2,3-bis-(O-geranylgeranyl)-sn-glycerol (CDP-archaeol) from 2,3-bis-(O-geranylgeranyl)-sn-glycerol 1-phosphate (DGGGP) and CTP. This reaction is the third ether-bond-formation step in the biosynthesis of archaeal membrane lipids. In Pyrococcus furiosus (strain ATCC 43587 / DSM 3638 / JCM 8422 / Vc1), this protein is CDP-archaeol synthase.